Consider the following 268-residue polypeptide: Myeloid leukemia factor 1 (268 aa).

Phosphoserine occurs at positions 8, 32, and 34. Disordered regions lie at residues 44–66 and 209–268; these read ISDG…SLTH and GRHN…SNKK. Residues 50-125 form an interaction with COPS3 region; sequence RAHNRRGHND…IGDEPPKVFQ (76 aa). Composition is skewed to basic and acidic residues over residues 56 to 65 and 226 to 237; these read GHNDGEDSLT and PGSRELKRREKP.

This sequence belongs to the MLF family. Interacts with CENPU. Also interacts with NRBP1/MADM, YWHAZ/14-3-3-zeta and HNRPUL2/MANP. NRBP1 recruits a serine kinase which phosphorylates both itself and MLF1. Phosphorylated MLF1 then binds to YWHAZ and is retained in the cytoplasm. Retained in the nucleus by binding to HNRPUL2. Binds to COPS3/CSN3 which is required for suppression of COP1 and activation of p53. Post-translationally, phosphorylation is required for binding to YWHAZ. In terms of tissue distribution, most abundant in testis, ovary, skeletal muscle, heart, kidney and colon. Low expression in spleen, thymus and peripheral blood leukocytes.

The protein localises to the cytoplasm. The protein resides in the nucleus. It localises to the cell projection. It is found in the cilium. Its subcellular location is the cytoskeleton. The protein localises to the cilium basal body. Functionally, involved in lineage commitment of primary hemopoietic progenitors by restricting erythroid formation and enhancing myeloid formation. Interferes with erythropoietin-induced erythroid terminal differentiation by preventing cells from exiting the cell cycle through suppression of CDKN1B/p27Kip1 levels. Suppresses COP1 activity via CSN3 which activates p53 and induces cell cycle arrest. Binds DNA and affects the expression of a number of genes so may function as a transcription factor in the nucleus. The protein is Myeloid leukemia factor 1 (MLF1) of Homo sapiens (Human).